The following is an 803-amino-acid chain: Carbon monoxide dehydrogenase large chain (803 aa).

Residue R384 is modified to 4-hydroxyarginine. C385 provides a ligand contact to Cu(+). E757 lines the Mo-molybdopterin cytosine dinucleotide pocket.

As to quaternary structure, dimer of heterotrimers. Each heterotrimer consists of a large, a medium and a small subunit. The cofactor is Cu(+). Mo-molybdopterin cytosine dinucleotide is required as a cofactor.

It carries out the reaction CO + a quinone + H2O = a quinol + CO2. Functionally, catalyzes the oxidation of carbon monoxide to carbon dioxide. The protein is Carbon monoxide dehydrogenase large chain (cutL) of Hydrogenophaga pseudoflava (Pseudomonas carboxydoflava).